The primary structure comprises 239 residues: Pyridoxine 5'-phosphate synthase (239 aa).

Asparagine 7 is a 3-amino-2-oxopropyl phosphate binding site. 9-10 is a binding site for 1-deoxy-D-xylulose 5-phosphate; that stretch reads DH. Arginine 18 is a 3-amino-2-oxopropyl phosphate binding site. Histidine 43 acts as the Proton acceptor in catalysis. Arginine 45 and histidine 50 together coordinate 1-deoxy-D-xylulose 5-phosphate. Glutamate 70 acts as the Proton acceptor in catalysis. Residue threonine 100 participates in 1-deoxy-D-xylulose 5-phosphate binding. The active-site Proton donor is histidine 191. 3-amino-2-oxopropyl phosphate contacts are provided by residues glycine 192 and 213-214; that span reads GH.

This sequence belongs to the PNP synthase family. As to quaternary structure, homooctamer; tetramer of dimers.

The protein localises to the cytoplasm. It catalyses the reaction 3-amino-2-oxopropyl phosphate + 1-deoxy-D-xylulose 5-phosphate = pyridoxine 5'-phosphate + phosphate + 2 H2O + H(+). It functions in the pathway cofactor biosynthesis; pyridoxine 5'-phosphate biosynthesis; pyridoxine 5'-phosphate from D-erythrose 4-phosphate: step 5/5. Functionally, catalyzes the complicated ring closure reaction between the two acyclic compounds 1-deoxy-D-xylulose-5-phosphate (DXP) and 3-amino-2-oxopropyl phosphate (1-amino-acetone-3-phosphate or AAP) to form pyridoxine 5'-phosphate (PNP) and inorganic phosphate. The chain is Pyridoxine 5'-phosphate synthase from Geobacter sulfurreducens (strain ATCC 51573 / DSM 12127 / PCA).